The primary structure comprises 180 residues: Small ribosomal subunit protein uS4 (180 aa).

The region spanning 103–165 is the S4 RNA-binding domain; that stretch reads RRLQTLVYKK…KNSPFAKESH (63 aa).

Belongs to the universal ribosomal protein uS4 family. In terms of assembly, part of the 30S ribosomal subunit. Contacts protein S5. The interaction surface between S4 and S5 is involved in control of translational fidelity.

Functionally, one of the primary rRNA binding proteins, it binds directly to 16S rRNA where it nucleates assembly of the body of the 30S subunit. Its function is as follows. With S5 and S12 plays an important role in translational accuracy. This is Small ribosomal subunit protein uS4 from Thermococcus gammatolerans (strain DSM 15229 / JCM 11827 / EJ3).